We begin with the raw amino-acid sequence, 407 residues long: Peptidase T (407 aa).

Residue His-82 coordinates Zn(2+). The active site involves Asp-84. Asp-143 serves as a coordination point for Zn(2+). Glu-177 (proton acceptor) is an active-site residue. Glu-178, Asp-200, and His-382 together coordinate Zn(2+).

It belongs to the peptidase M20B family. Requires Zn(2+) as cofactor.

The protein localises to the cytoplasm. The catalysed reaction is Release of the N-terminal residue from a tripeptide.. Functionally, cleaves the N-terminal amino acid of tripeptides. The protein is Peptidase T of Streptococcus pyogenes serotype M2 (strain MGAS10270).